The chain runs to 227 residues: Cytochrome c oxidase subunit 2 (227 aa).

The Mitochondrial intermembrane portion of the chain corresponds to 1 to 26 (MSTWKNLFLQDSASPLMELLMCFHDH). Residues 27-48 (AMLILILITIMVSQMLLSMLFN) traverse the membrane as a helical segment. Topologically, residues 49-62 (KLSHRYLLEGQLIE) are mitochondrial matrix. A helical transmembrane segment spans residues 63-82 (TIWTIIPAIILILIALPSLR). Over 83-227 (LLYILDEINN…LFLNWVISKA (145 aa)) the chain is Mitochondrial intermembrane. Cu cation is bound by residues His-161, Cys-196, Glu-198, Cys-200, His-204, and Met-207. Glu-198 is a Mg(2+) binding site.

The protein belongs to the cytochrome c oxidase subunit 2 family. As to quaternary structure, component of the cytochrome c oxidase (complex IV, CIV), a multisubunit enzyme composed of a catalytic core of 3 subunits and several supernumerary subunits. The complex exists as a monomer or a dimer and forms supercomplexes (SCs) in the inner mitochondrial membrane with ubiquinol-cytochrome c oxidoreductase (cytochrome b-c1 complex, complex III, CIII). Cu cation serves as cofactor.

The protein localises to the mitochondrion inner membrane. The catalysed reaction is 4 Fe(II)-[cytochrome c] + O2 + 8 H(+)(in) = 4 Fe(III)-[cytochrome c] + 2 H2O + 4 H(+)(out). Functionally, component of the cytochrome c oxidase, the last enzyme in the mitochondrial electron transport chain which drives oxidative phosphorylation. The respiratory chain contains 3 multisubunit complexes succinate dehydrogenase (complex II, CII), ubiquinol-cytochrome c oxidoreductase (cytochrome b-c1 complex, complex III, CIII) and cytochrome c oxidase (complex IV, CIV), that cooperate to transfer electrons derived from NADH and succinate to molecular oxygen, creating an electrochemical gradient over the inner membrane that drives transmembrane transport and the ATP synthase. Cytochrome c oxidase is the component of the respiratory chain that catalyzes the reduction of oxygen to water. Electrons originating from reduced cytochrome c in the intermembrane space (IMS) are transferred via the dinuclear copper A center (CU(A)) of subunit 2 and heme A of subunit 1 to the active site in subunit 1, a binuclear center (BNC) formed by heme A3 and copper B (CU(B)). The BNC reduces molecular oxygen to 2 water molecules using 4 electrons from cytochrome c in the IMS and 4 protons from the mitochondrial matrix. The sequence is that of Cytochrome c oxidase subunit 2 (COII) from Sitophilus granarius (Granary weevil).